Here is a 506-residue protein sequence, read N- to C-terminus: uncharacterized protein (506 aa).

It to group II intron maturases.

It is found in the plastid. It localises to the chloroplast. This is an uncharacterized protein from Euglena gracilis.